We begin with the raw amino-acid sequence, 105 residues long: Hydrogen cyanide synthase subunit HcnA (105 aa).

The 82-residue stretch at 16–97 (ADMTISLNGQ…GMQVQTLSNR (82 aa)) folds into the 2Fe-2S ferredoxin-type domain. [2Fe-2S] cluster-binding residues include Cys60, Cys65, Cys68, and Cys81.

As to quaternary structure, heterotrimer of HcnA, HcnB and HcnC.

The protein resides in the cell membrane. The catalysed reaction is glycine + 2 A = hydrogen cyanide + 2 AH2 + CO2. Functionally, a three-component membrane-bound flavoenzyme that catalyzes the formation of hydrogen cyanide, a secondary metabolite, by transfer of electrons to a cyanide-resistant branch of the aerobic respiratory chain. Contributes to suppression of black root rot of tobacco. The polypeptide is Hydrogen cyanide synthase subunit HcnA (Pseudomonas protegens (strain DSM 19095 / LMG 27888 / CFBP 6595 / CHA0)).